Reading from the N-terminus, the 452-residue chain is Bifunctional protein GlmU (452 aa).

Residues 1–226 (MSLSVVILAA…ATEVEGVNTR (226 aa)) are pyrophosphorylase. Residues 8-11 (LAAG), K22, Q73, 78-79 (GT), 100-102 (YGD), G137, E151, N166, and N224 contribute to the UDP-N-acetyl-alpha-D-glucosamine site. Position 102 (D102) interacts with Mg(2+). N224 is a Mg(2+) binding site. The interval 227-247 (LQLANLERAYQLKKATELLLS) is linker. The N-acetyltransferase stretch occupies residues 248-452 (GVMLRDPNRF…INNWKRPTKK (205 aa)). Residues R330 and K348 each contribute to the UDP-N-acetyl-alpha-D-glucosamine site. H360 (proton acceptor) is an active-site residue. UDP-N-acetyl-alpha-D-glucosamine contacts are provided by Y363 and N374. Residues A377, 383–384 (NY), S402, A420, and R437 contribute to the acetyl-CoA site.

The protein in the N-terminal section; belongs to the N-acetylglucosamine-1-phosphate uridyltransferase family. In the C-terminal section; belongs to the transferase hexapeptide repeat family. In terms of assembly, homotrimer. Mg(2+) is required as a cofactor.

The protein resides in the cytoplasm. It carries out the reaction alpha-D-glucosamine 1-phosphate + acetyl-CoA = N-acetyl-alpha-D-glucosamine 1-phosphate + CoA + H(+). The enzyme catalyses N-acetyl-alpha-D-glucosamine 1-phosphate + UTP + H(+) = UDP-N-acetyl-alpha-D-glucosamine + diphosphate. The protein operates within nucleotide-sugar biosynthesis; UDP-N-acetyl-alpha-D-glucosamine biosynthesis; N-acetyl-alpha-D-glucosamine 1-phosphate from alpha-D-glucosamine 6-phosphate (route II): step 2/2. It functions in the pathway nucleotide-sugar biosynthesis; UDP-N-acetyl-alpha-D-glucosamine biosynthesis; UDP-N-acetyl-alpha-D-glucosamine from N-acetyl-alpha-D-glucosamine 1-phosphate: step 1/1. It participates in bacterial outer membrane biogenesis; LPS lipid A biosynthesis. In terms of biological role, catalyzes the last two sequential reactions in the de novo biosynthetic pathway for UDP-N-acetylglucosamine (UDP-GlcNAc). The C-terminal domain catalyzes the transfer of acetyl group from acetyl coenzyme A to glucosamine-1-phosphate (GlcN-1-P) to produce N-acetylglucosamine-1-phosphate (GlcNAc-1-P), which is converted into UDP-GlcNAc by the transfer of uridine 5-monophosphate (from uridine 5-triphosphate), a reaction catalyzed by the N-terminal domain. The polypeptide is Bifunctional protein GlmU (Psychromonas ingrahamii (strain DSM 17664 / CCUG 51855 / 37)).